We begin with the raw amino-acid sequence, 814 residues long: Cellulase/esterase CelE (814 aa).

A signal peptide spans 1 to 34 (MKKIVSLVCVLVMLVSILGSFSVVAASPVKGFQV). The tract at residues 35 to 354 (SGTKLLDASG…AVFWWDNGYY (320 aa)) is cellulase. The active-site Proton donor; for cellulase activity is Glu193. The active-site Nucleophile; for cellulase activity is the Glu316. The Dockerin domain occupies 409–479 (ANILYGDVNG…LLRSIDKFPA (71 aa)). Residues Asp415, Asn417, Asp419, Gly420, Lys421, Asp426, Asp451, Val452, Asn453, Asp455, Lys457, and Asp462 each coordinate Ca(2+). Residues 490 to 814 (PGILYNGRFD…TAEIKNKLGW (325 aa)) are esterase. Ser612 (nucleophile; for esterase activity) is an active-site residue.

This sequence in the N-terminal section; belongs to the glycosyl hydrolase 5 (cellulase A) family. In the C-terminal section; belongs to the carbohydrate esterase 2 (CE2) family.

The protein resides in the secreted. The catalysed reaction is Endohydrolysis of (1-&gt;4)-beta-D-glucosidic linkages in cellulose, lichenin and cereal beta-D-glucans.. It carries out the reaction Deacetylation of xylans and xylo-oligosaccharides.. Its pathway is glycan metabolism; cellulose degradation. It functions in the pathway glycan degradation; xylan degradation. With respect to regulation, esterase activity of the CE2 module is inhibited when this domain binds to cellohexaose or beta-glucan. Its function is as follows. Multifunctional enzyme involved in the degradation of plant cell wall polysaccharides. Displays endoglucanase activity against carboxymethyl cellulose (CMC) and barley beta-glucan. Also catalyzes the deacetylation of acetylated birchwood xylan and glucomannan, with a preference for the latter, and of the synthetic substrate 4-nitrophenyl acetate (4-NPAc). The chain is Cellulase/esterase CelE from Acetivibrio thermocellus (strain ATCC 27405 / DSM 1237 / JCM 9322 / NBRC 103400 / NCIMB 10682 / NRRL B-4536 / VPI 7372) (Clostridium thermocellum).